The sequence spans 484 residues: Probable sphingolipid transporter spinster homolog 2 (484 aa).

The interval 1-23 (MDVDGEGDRGQNPRIMERDSDSI) is disordered. A helical membrane pass occupies residues 38-58 (LLFVFCVVNLINYIDRGAIAS). Residues asparagine 62 and asparagine 85 are each glycosylated (N-linked (GlcNAc...) asparagine). 11 helical membrane passes run 93 to 113 (VLSSAFMVGLLVASPIFASLA), 122 to 142 (IGVGLSIWTLAVIGCGLSFDF), 147 to 167 (ICRMFVGVGEASFVSLAAPFI), 181 to 201 (AVFYMCIPTGYAFGYVYGGVV), 209 to 229 (AAFWGEAILMLPFAVLGFVIK), 273 to 293 (VYVTNILGYIAYNFVLGAYSY), 311 to 331 (IFGGVTVVCGIVGTLSGGVIL), 345 to 362 (LSVSTFIGAIFCFAAFCF), 377 to 397 (LLVFATQGPVNFIVLHCVKPS), 405 to 425 (MSTVSIHIFGDVPSSPLVGVL), and 436 to 456 (SLVLTFVLFPAAAIWSIGIFL). Serine 466 carries the phosphoserine modification.

The protein belongs to the major facilitator superfamily. Spinster (TC 2.A.1.49) family.

It localises to the late endosome membrane. The protein localises to the lysosome membrane. Its function is as follows. Probable sphingolipid transporter that plays a central role in endosomes and/or lysosomes storage. The chain is Probable sphingolipid transporter spinster homolog 2 from Arabidopsis thaliana (Mouse-ear cress).